A 94-amino-acid polypeptide reads, in one-letter code: Large ribosomal subunit protein bL31 (94 aa).

Residues 64-94 are disordered; it reads KYGMANPDEDSTKNTKSSKKETSEDSSSKGS. Basic and acidic residues predominate over residues 73–94; it reads DSTKNTKSSKKETSEDSSSKGS.

It belongs to the bacterial ribosomal protein bL31 family. Type A subfamily. Part of the 50S ribosomal subunit.

Binds the 23S rRNA. The sequence is that of Large ribosomal subunit protein bL31 from Prochlorococcus marinus (strain SARG / CCMP1375 / SS120).